Here is an 828-residue protein sequence, read N- to C-terminus: Periplasmic nitrate reductase (828 aa).

Positions 1–31 form a signal peptide, tat-type signal; the sequence is MKLSRRSFMKANAVAAAAAAAGLSVPGVARA. A 4Fe-4S Mo/W bis-MGD-type domain is found at 39–95; it reads IKWDKAPCRFCGTGCGVLVGTQQGRVVACQGDPDAPVNRGLNCIKGYFLPKIMYGKD. [4Fe-4S] cluster contacts are provided by C46, C49, C53, and C81. Residues K83, Q150, N175, C179, 212 to 219, 243 to 247, 262 to 264, M372, Q376, N482, 508 to 509, K531, D558, and 718 to 727 each bind Mo-bis(molybdopterin guanine dinucleotide); these read WGANMAEM, STYQH, QSD, SD, and TGRVLEHWHT. Residue F794 coordinates substrate. Residues N802 and K819 each contribute to the Mo-bis(molybdopterin guanine dinucleotide) site.

Belongs to the prokaryotic molybdopterin-containing oxidoreductase family. NasA/NapA/NarB subfamily. Component of the periplasmic nitrate reductase NapAB complex composed of NapA and NapB. It depends on [4Fe-4S] cluster as a cofactor. Requires Mo-bis(molybdopterin guanine dinucleotide) as cofactor. Predicted to be exported by the Tat system. The position of the signal peptide cleavage has not been experimentally proven.

Its subcellular location is the periplasm. It catalyses the reaction 2 Fe(II)-[cytochrome] + nitrate + 2 H(+) = 2 Fe(III)-[cytochrome] + nitrite + H2O. In terms of biological role, catalytic subunit of the periplasmic nitrate reductase complex NapAB. Receives electrons from NapB and catalyzes the reduction of nitrate to nitrite. The chain is Periplasmic nitrate reductase from Shigella flexneri.